Reading from the N-terminus, the 205-residue chain is Outer-membrane lipoprotein carrier protein (205 aa).

Residues 1 to 22 (MKKTTLKFAALTLLGLSNLALA) form the signal peptide.

Belongs to the LolA family. Monomer.

The protein resides in the periplasm. Participates in the translocation of lipoproteins from the inner membrane to the outer membrane. Only forms a complex with a lipoprotein if the residue after the N-terminal Cys is not an aspartate (The Asp acts as a targeting signal to indicate that the lipoprotein should stay in the inner membrane). This chain is Outer-membrane lipoprotein carrier protein, found in Haemophilus influenzae (strain PittEE).